A 127-amino-acid polypeptide reads, in one-letter code: Copper resistance protein C (127 aa).

A signal peptide spans 1–25 (MFAFRSIATTVVMVAASLASASAFA). Positions 26, 65, 68, 71, 76, and 116 each coordinate Cu cation.

The protein belongs to the CopC family.

The protein resides in the periplasm. Its function is as follows. Copper-binding protein involved in copper resistance. The chain is Copper resistance protein C from Xanthomonas campestris pv. juglandis (Xanthomonas arboricola pv. juglandis).